The chain runs to 439 residues: Elongation factor Tu, mitochondrial (439 aa).

One can recognise a tr-type G domain in the interval 51–246; that stretch reads KPHVNIGTIG…AVDSYITLPE (196 aa). A G1 region spans residues 60-67; the sequence is GHVDHGKT. 60 to 67 is a binding site for GTP; the sequence is GHVDHGKT. The segment at 101 to 105 is G2; it reads GITIS. The segment at 122–125 is G3; sequence DCPG. Residues 122 to 126 and 177 to 180 each bind GTP; these read DCPGH and NKVD. A G4 region spans residues 177–180; that stretch reads NKVD. Residues 214–216 are G5; sequence SAL.

It belongs to the TRAFAC class translation factor GTPase superfamily. Classic translation factor GTPase family. EF-Tu/EF-1A subfamily.

It localises to the mitochondrion. This protein promotes the GTP-dependent binding of aminoacyl-tRNA to the A-site of ribosomes during protein biosynthesis. This is Elongation factor Tu, mitochondrial (tuf1) from Schizosaccharomyces pombe (strain 972 / ATCC 24843) (Fission yeast).